A 439-amino-acid chain; its full sequence is Large ribosomal subunit protein mL65 (439 aa).

The protein belongs to the mitochondrion-specific ribosomal protein mL65 family. In terms of assembly, component of the mitochondrial large ribosomal subunit (mt-LSU). Mature mammalian 55S mitochondrial ribosomes consist of a small (28S) and a large (39S) subunit. The 28S small subunit contains a 12S ribosomal RNA (12S mt-rRNA) and 30 different proteins. The 39S large subunit contains a 16S rRNA (16S mt-rRNA), a copy of mitochondrial valine transfer RNA (mt-tRNA(Val)), which plays an integral structural role, and 52 different proteins. mL65 forms a heterodimer with mL37. As to expression, heart, skeletal muscle, kidney and liver. Lower expression in placenta and peripheral blood leukocytes.

The protein resides in the mitochondrion. The polypeptide is Large ribosomal subunit protein mL65 (MRPS30) (Homo sapiens (Human)).